The sequence spans 198 residues: Recombination protein RecR (198 aa).

The segment at 57 to 72 adopts a C4-type zinc-finger fold; the sequence is CEKCNTFTEAQICEVC. Positions 80–175 constitute a Toprim domain; sequence TLLCVVETPA…SVTRLARGVP (96 aa).

Belongs to the RecR family.

May play a role in DNA repair. It seems to be involved in an RecBC-independent recombinational process of DNA repair. It may act with RecF and RecO. The chain is Recombination protein RecR from Paraburkholderia phymatum (strain DSM 17167 / CIP 108236 / LMG 21445 / STM815) (Burkholderia phymatum).